We begin with the raw amino-acid sequence, 352 residues long: Nicotinate-nucleotide--dimethylbenzimidazole phosphoribosyltransferase (352 aa).

The Proton acceptor role is filled by Glu316.

The protein belongs to the CobT family.

It carries out the reaction 5,6-dimethylbenzimidazole + nicotinate beta-D-ribonucleotide = alpha-ribazole 5'-phosphate + nicotinate + H(+). It participates in nucleoside biosynthesis; alpha-ribazole biosynthesis; alpha-ribazole from 5,6-dimethylbenzimidazole: step 1/2. Functionally, catalyzes the synthesis of alpha-ribazole-5'-phosphate from nicotinate mononucleotide (NAMN) and 5,6-dimethylbenzimidazole (DMB). The protein is Nicotinate-nucleotide--dimethylbenzimidazole phosphoribosyltransferase of Yersinia enterocolitica serotype O:8 / biotype 1B (strain NCTC 13174 / 8081).